Reading from the N-terminus, the 261-residue chain is Thioesterase TesA (261 aa).

Positions 1–24 (MLARHGPRYGGSVNGHSDDSSGDA) are disordered. Residues Ser104, Asp208, and His236 contribute to the active site.

The protein belongs to the thioesterase family.

The enzyme catalyses a fatty acyl-CoA + H2O = a fatty acid + CoA + H(+). Involved in the synthesis of both phthiocerol dimycocerosates (PDIMs) and phenolic glycolipids (PGLs), which are structurally related lipids non-covalently bound to the outer cell wall layer of M.tuberculosis and are important virulence factors. The chain is Thioesterase TesA (tesA) from Mycobacterium bovis (strain ATCC BAA-935 / AF2122/97).